Reading from the N-terminus, the 684-residue chain is Cleavage and polyadenylation specificity factor subunit 3 (684 aa).

The residue at position 2 (serine 2) is an N-acetylserine. Residues histidine 71, histidine 73, aspartate 75, histidine 76, histidine 158, and aspartate 179 each contribute to the Zn(2+) site. The active-site Proton donor is the histidine 396. Histidine 418 provides a ligand contact to Zn(2+). Residues lysine 462, lysine 465, and lysine 545 each participate in a glycyl lysine isopeptide (Lys-Gly) (interchain with G-Cter in SUMO) cross-link. The residue at position 659 (serine 659) is a Phosphoserine. Threonine 681 carries the phosphothreonine modification.

Belongs to the metallo-beta-lactamase superfamily. RNA-metabolizing metallo-beta-lactamase-like family. CPSF3 subfamily. Component of the cleavage and polyadenylation specificity factor (CPSF) complex, composed of CPSF1, CPSF2, CPSF3, CPSF4 and FIP1L1. Interacts with CPSF2, CSTF2 and SYMPK. Interacts with TUT1; the interaction is direct and mediates the recruitment of the CPSF complex on the 3'UTR of pre-mRNAs. Interacts with WDR33. Interacts with ZC3H3. Requires Zn(2+) as cofactor. Post-translationally, sumoylated on Lys-462, Lys-465 and Lys-545, preferentially by SUMO3.

The protein localises to the nucleus. Component of the cleavage and polyadenylation specificity factor (CPSF) complex that plays a key role in pre-mRNA 3'-end formation, recognizing the AAUAAA signal sequence and interacting with poly(A) polymerase and other factors to bring about cleavage and poly(A) addition. Has endonuclease activity, and functions as an mRNA 3'-end-processing endonuclease. Also involved in the histone 3'-end pre-mRNA processing. U7 snRNP-dependent protein that induces both the 3'-endoribonucleolytic cleavage of histone pre-mRNAs and acts as a 5' to 3' exonuclease for degrading the subsequent downstream cleavage product (DCP) of mature histone mRNAs. Cleavage occurs after the 5'-ACCCA-3' sequence in the histone pre-mRNA leaving a 3'hydroxyl group on the upstream fragment containing the stem loop (SL) and 5' phosphate on the downstream cleavage product (DCP) starting with CU nucleotides. The U7-dependent 5' to 3' exonuclease activity is processive and degrades the DCP RNA substrate even after complete removal of the U7-binding site. Binds to the downstream cleavage product (DCP) of histone pre-mRNAs and the cleaved DCP RNA substrate in a U7 snRNP dependent manner. Required for entering/progressing through S-phase of the cell cycle. Required for the selective processing of microRNAs (miRNAs) during embryonic stem cell differentiation via its interaction with ISY1. Required for the biogenesis of all miRNAs from the pri-miR-17-92 primary transcript except miR-92a. Only required for the biogenesis of miR-290 and miR-96 from the pri-miR-290-295 and pri-miR-96-183 primary transcripts, respectively. The chain is Cleavage and polyadenylation specificity factor subunit 3 (CPSF3) from Homo sapiens (Human).